Consider the following 522-residue polypeptide: Light-independent protochlorophyllide reductase subunit B (522 aa).

Residue aspartate 36 coordinates [4Fe-4S] cluster. The active-site Proton donor is aspartate 274. 409 to 410 (GL) contacts substrate. A disordered region spans residues 426-464 (DEAGPSHHGGKAVPASAPRAEATADEGSTPEEAVPPVAA). The segment covering 455–464 (PEEAVPPVAA) has biased composition (low complexity).

The protein belongs to the ChlB/BchB/BchZ family. Protochlorophyllide reductase is composed of three subunits; BchL, BchN and BchB. Forms a heterotetramer of two BchB and two BchN subunits. The cofactor is [4Fe-4S] cluster.

It carries out the reaction chlorophyllide a + oxidized 2[4Fe-4S]-[ferredoxin] + 2 ADP + 2 phosphate = protochlorophyllide a + reduced 2[4Fe-4S]-[ferredoxin] + 2 ATP + 2 H2O. The protein operates within porphyrin-containing compound metabolism; bacteriochlorophyll biosynthesis (light-independent). In terms of biological role, component of the dark-operative protochlorophyllide reductase (DPOR) that uses Mg-ATP and reduced ferredoxin to reduce ring D of protochlorophyllide (Pchlide) to form chlorophyllide a (Chlide). This reaction is light-independent. The NB-protein (BchN-BchB) is the catalytic component of the complex. The sequence is that of Light-independent protochlorophyllide reductase subunit B from Cereibacter sphaeroides (strain ATCC 17025 / ATH 2.4.3) (Rhodobacter sphaeroides).